We begin with the raw amino-acid sequence, 525 residues long: Anti-silencing protein 2 (525 aa).

The segment at 467–525 (LPRVPTDSPQLPSKDKSQETAKKDDRPKLVANEPVTLDTSTPPVAQSLADSKHCSGLHK) is disordered. A compositionally biased stretch (basic and acidic residues) spans 479 to 494 (SKDKSQETAKKDDRPK).

In terms of biological role, derepression of silent mating type loci when overexpressed. The sequence is that of Anti-silencing protein 2 (ASF2) from Saccharomyces cerevisiae (strain ATCC 204508 / S288c) (Baker's yeast).